A 346-amino-acid chain; its full sequence is Phosphate acyltransferase (346 aa).

This sequence belongs to the PlsX family. In terms of assembly, homodimer. Probably interacts with PlsY.

The protein resides in the cytoplasm. It carries out the reaction a fatty acyl-[ACP] + phosphate = an acyl phosphate + holo-[ACP]. The protein operates within lipid metabolism; phospholipid metabolism. Catalyzes the reversible formation of acyl-phosphate (acyl-PO(4)) from acyl-[acyl-carrier-protein] (acyl-ACP). This enzyme utilizes acyl-ACP as fatty acyl donor, but not acyl-CoA. This chain is Phosphate acyltransferase, found in Pelobacter propionicus (strain DSM 2379 / NBRC 103807 / OttBd1).